The sequence spans 154 residues: Large ribosomal subunit protein uL24 (154 aa).

The segment at 97-154 (EIAARKNLPPPEVPEETSNDTKESDENVTGADKEETNEIKEEDLNDNEDKNNDGSQEA) is disordered. Residues 115 to 135 (NDTKESDENVTGADKEETNEI) are compositionally biased toward basic and acidic residues.

Belongs to the universal ribosomal protein uL24 family. Part of the 50S ribosomal subunit.

One of two assembly initiator proteins, it binds directly to the 5'-end of the 23S rRNA, where it nucleates assembly of the 50S subunit. Functionally, located at the polypeptide exit tunnel on the outside of the subunit. The chain is Large ribosomal subunit protein uL24 from Picrophilus torridus (strain ATCC 700027 / DSM 9790 / JCM 10055 / NBRC 100828 / KAW 2/3).